A 219-amino-acid polypeptide reads, in one-letter code: Transcriptional activator protein rep2 (219 aa).

Residues 177–197 fold into a zinc finger; that stretch reads CSKCNTTFNHSTALMMHEATC.

Its function is as follows. Transcriptional activator which interacts with the mcb binding subunit complex formed by res2 and cdc10. Rep2 is required for the mitotic cell cycle start. This Schizosaccharomyces pombe (strain 972 / ATCC 24843) (Fission yeast) protein is Transcriptional activator protein rep2 (rep2).